Reading from the N-terminus, the 128-residue chain is Sulfurtransferase TusD (128 aa).

Cys78 (cysteine persulfide intermediate) is an active-site residue.

It belongs to the DsrE/TusD family. As to quaternary structure, heterohexamer, formed by a dimer of trimers. The hexameric TusBCD complex contains 2 copies each of TusB, TusC and TusD. The TusBCD complex interacts with TusE.

It localises to the cytoplasm. Its function is as follows. Part of a sulfur-relay system required for 2-thiolation of 5-methylaminomethyl-2-thiouridine (mnm(5)s(2)U) at tRNA wobble positions. Accepts sulfur from TusA and transfers it in turn to TusE. This is Sulfurtransferase TusD from Salmonella newport (strain SL254).